We begin with the raw amino-acid sequence, 319 residues long: MTLKLAVLRQIFQGSKGWHLWQHWRAFYSSSASGNGKLCCQTGTTDKNTHATRVVDLSYDLYDGSAPGPPLVLLHGLFGSKSNFQSIARALVRKTGRKVLTLDARNHGCSPHDDIMTYPAMSADVCQILHKLQITSCVLIGHSMGGKTAMTVALQEPKLVERFVSVDISPAATVPQTGFPHYIAAMQKVHLEGKIPRSTARRLAEEQLSSTVKEASIRQFLLTNLVQENGTFKWRVNLEVISQHLQDLLDFPEFQEPYPGPALFLGGANSPYISSENYPEIERLFPCANVEYIFGAGHWVHADKTHDFLNSICNFVESA.

Residues 1–28 constitute a mitochondrion transit peptide; it reads MTLKLAVLRQIFQGSKGWHLWQHWRAFY. In terms of domain architecture, AB hydrolase-1 spans 69 to 304; it reads PPLVLLHGLF…GAGHWVHADK (236 aa). Catalysis depends on charge relay system residues Ser143, Glu239, and His298.

It belongs to the AB hydrolase superfamily. In terms of processing, phosphorylated.

The protein resides in the mitochondrion. Its subcellular location is the mitochondrion matrix. It carries out the reaction 1-octadecanoyl-2-(5Z,8Z,11Z,14Z-eicosatetraenoyl)-sn-glycerol + H2O = 2-(5Z,8Z,11Z,14Z-eicosatetraenoyl)-glycerol + octadecanoate + H(+). It catalyses the reaction a 1,2-diacyl-sn-glycerol + H2O = a 2-acylglycerol + a fatty acid + H(+). The catalysed reaction is a 1,3-diacyl-sn-glycerol + H2O = a 1-acyl-sn-glycerol + a fatty acid + H(+). The enzyme catalyses 1-octadecanoyl-2-(9Z-octadecenoyl)-sn-glycerol + H2O = 2-(9Z-octadecenoyl)-glycerol + octadecanoate + H(+). It carries out the reaction 1-octadecanoyl-2-(4Z,7Z,10Z,13Z,16Z,19Z-docosahexaenoyl)-sn-glycerol + H2O = 2-(4Z,7Z,10Z,13Z,16Z,19Z-docosahexaenoyl)-glycerol + octadecanoate + H(+). It catalyses the reaction 1,2-didecanoylglycerol + H2O = decanoylglycerol + decanoate + H(+). Functionally, catalyzes the hydrolysis of diacylglycerol in vitro and may function as a key regulator in lipid metabolism, namely by regulating the intracellular levels of diacylglycerol. 1,2-diacyl-sn-glycerols are the preferred substrate over 1,3-diacyl-sn-glycerols. The enzyme hydrolyzes stearate in preference to palmitate from the sn-1 position of 1,2-diacyl-sn-glycerols. The sequence is that of sn-1-specific diacylglycerol lipase ABHD11 from Xenopus tropicalis (Western clawed frog).